The primary structure comprises 382 residues: Mannitol-1-phosphate 5-dehydrogenase (382 aa).

Position 3–14 (3–14 (ALHFGAGNIGRG)) interacts with NAD(+). An N6-acetyllysine modification is found at lysine 269.

This sequence belongs to the mannitol dehydrogenase family.

The catalysed reaction is D-mannitol 1-phosphate + NAD(+) = beta-D-fructose 6-phosphate + NADH + H(+). This Escherichia coli O139:H28 (strain E24377A / ETEC) protein is Mannitol-1-phosphate 5-dehydrogenase.